We begin with the raw amino-acid sequence, 658 residues long: ATP-dependent RNA helicase MSS116, mitochondrial (658 aa).

A mitochondrion-targeting transit peptide spans 1 to 35; sequence MFRVTGIATARAVALQPFRAPLGVIRRFGISATAS. The segment covering 40-79 has biased composition (basic and acidic residues); sequence HGHDMQSRNGSRWDSRRQGDRRSSRWEGRGSDREDGERGS. The disordered stretch occupies residues 40–104; it reads HGHDMQSRNG…DGAAREGFSL (65 aa). The Q motif signature appears at 126–154; it reads TLVEEGVLSNELYEMLQSRGFDKLTPVQQ. A Helicase ATP-binding domain is found at 158-343; the sequence is KPILQTEHDV…NSIMNHAKCL (186 aa). 171–178 lines the ATP pocket; sequence AKTGTGKT. The short motif at 284–287 is the DEAD box element; that stretch reads DEAD. One can recognise a Helicase C-terminal domain in the interval 372–528; it reads NITASLYKIR…TFDAAAQELS (157 aa).

Belongs to the DEAD box helicase family. DDX18/HAS1 subfamily.

It localises to the mitochondrion matrix. The enzyme catalyses ATP + H2O = ADP + phosphate + H(+). Functionally, ATP-dependent RNA helicase required for mitochondrial splicing of group I and II introns. Also required for efficient mitochondrial translation. The protein is ATP-dependent RNA helicase MSS116, mitochondrial (MSS116) of Eremothecium gossypii (strain ATCC 10895 / CBS 109.51 / FGSC 9923 / NRRL Y-1056) (Yeast).